A 220-amino-acid polypeptide reads, in one-letter code: Ribosomal RNA large subunit methyltransferase E (220 aa).

The S-adenosyl-L-methionine site is built by Gly60, Trp62, Asp92, Asp108, and Asp133. Lys173 (proton acceptor) is an active-site residue. The interval 195–220 is disordered; sequence APRKPKASRDKSSETFILGRHLKQPR.

It belongs to the class I-like SAM-binding methyltransferase superfamily. RNA methyltransferase RlmE family.

The protein resides in the cytoplasm. It carries out the reaction uridine(2552) in 23S rRNA + S-adenosyl-L-methionine = 2'-O-methyluridine(2552) in 23S rRNA + S-adenosyl-L-homocysteine + H(+). Functionally, specifically methylates the uridine in position 2552 of 23S rRNA at the 2'-O position of the ribose in the fully assembled 50S ribosomal subunit. The chain is Ribosomal RNA large subunit methyltransferase E from Burkholderia pseudomallei (strain 1710b).